The primary structure comprises 635 residues: Very-long-chain aldehyde decarbonylase GL1-6 (635 aa).

4 helical membrane-spanning segments follow: residues 46-66 (LLNF…QLWI), 100-120 (IILT…AQVA), 127-147 (GMVV…YWLH), and 183-203 (VVYF…GTVS). The 135-residue stretch at 139–273 (VEFLYYWLHR…MPVYDYIYGT (135 aa)) folds into the Fatty acid hydroxylase domain.

It belongs to the sterol desaturase family. As to quaternary structure, homodimer. As to expression, expressed in germinating seeds and shoots.

It is found in the endoplasmic reticulum membrane. The catalysed reaction is a long-chain fatty aldehyde + 2 NADPH + O2 + H(+) = a long-chain alkane + formate + 2 NADP(+) + H2O. Aldehyde decarbonylase involved in the conversion of aldehydes to alkanes. Core component of a very-long-chain alkane synthesis complex. In Oryza sativa subsp. japonica (Rice), this protein is Very-long-chain aldehyde decarbonylase GL1-6.